We begin with the raw amino-acid sequence, 265 residues long: Leucine-rich repeat-containing protein Bf66946 (265 aa).

The N-terminal stretch at 1–20 (MALRDIFLLSMAMTAVTVQA) is a signal peptide. Cystine bridges form between Cys-21–Cys-27 and Cys-25–Cys-39. The 30-residue stretch at 21-50 (CPSACKCTVSLYGEMVVACGGMGLTEIPED) folds into the LRRNT domain. LRR repeat units follow at residues 51–75 (IPHRAVYLVLKDNNITKITSYSFKG), 76–99 (LRNLQGIDLSNNKINHISSAALRH), and 100–123 (LGHLDDIDLSRNELTSVSEKLFDF). Asn-64 is a glycosylation site (N-linked (GlcNAc...) asparagine). Residues 142 to 193 (NPWGCDCRMAWLAQELAGGSKTFGDRHMECATPAALAGRGLSEIPQTSFVCT) form the LRRCT domain. Cystine bridges form between Cys-146–Cys-171 and Cys-148–Cys-192. Residues 220–240 (VAVVFGCITGLVTILLLVLTA) form a helical membrane-spanning segment.

The protein localises to the cell membrane. Functionally, binds selectively to the Gram-positive bacteria S.aureus and S.pneumoniae. Does not adhere to the Gram-negative bacteria E.coli and S.enterica. Probably recognizes peptidoglycans expressed on the bacterial cell surface. This is Leucine-rich repeat-containing protein Bf66946 from Branchiostoma floridae (Florida lancelet).